A 631-amino-acid chain; its full sequence is Plastidic ATP/ADP-transporter (631 aa).

The next 11 helical transmembrane spans lie at 106–126, 149–169, 180–200, 238–258, 271–290, 313–333, 369–389, 407–427, 442–462, 465–485, and 543–563; these read IELV…CILF, IIPF…MLLY, ALFY…GFVL, LFYV…FWGF, FYPL…GRTV, GMMS…WWVN, LATL…TWKS, DFST…QWIF, VLLL…PLAP, AKFG…QNIF, and LASS…AWLG. A disordered region spans residues 586–631; sequence ERASLKIPVVSQNENGNGPLSSESSLNPAGGDSTNASSEPSSPRSL. Positions 595-631 are enriched in polar residues; it reads VSQNENGNGPLSSESSLNPAGGDSTNASSEPSSPRSL.

This sequence belongs to the ADP/ATP translocase tlc (TC 2.A.12.2) family.

The protein resides in the plastid. The protein localises to the chloroplast membrane. This Solanum tuberosum (Potato) protein is Plastidic ATP/ADP-transporter.